The primary structure comprises 327 residues: Complex I intermediate-associated protein 30, mitochondrial (327 aa).

A mitochondrion-targeting transit peptide spans 1–24 (MALVHKLLRGTYILRKFSKPASAL). The disordered stretch occupies residues 42–63 (PVASPGKASSQRKTEGDLQGDH). A compositionally biased stretch (basic and acidic residues) spans 53 to 63 (RKTEGDLQGDH). The residue at position 318 (Ser-318) is a Phosphoserine.

It belongs to the CIA30 family. As to quaternary structure, part of the mitochondrial complex I assembly/MCIA complex that comprises at least the core subunits TMEM126B, NDUFAF1, ECSIT and ACAD9 and complement subunits such as COA1 and TMEM186. Interacts with ECSIT. Interacts with ACAD9. At early stages of complex I assembly, it is found in intermediate subcomplexes that contain different subunits including NDUFB6, NDUFA6, NDUFA9, NDUFS3, NDUFS7, ND1, ND2 and ND3. Interacts with TMEM70 and TMEM242.

The protein resides in the mitochondrion. Its subcellular location is the mitochondrion matrix. As part of the MCIA complex, involved in the assembly of the mitochondrial complex I. The sequence is that of Complex I intermediate-associated protein 30, mitochondrial from Pongo pygmaeus (Bornean orangutan).